A 68-amino-acid polypeptide reads, in one-letter code: Protein SlyX homolog (68 aa).

The protein belongs to the SlyX family.

This Pseudomonas syringae pv. syringae (strain B728a) protein is Protein SlyX homolog.